A 206-amino-acid chain; its full sequence is Ras-related protein Rab-18 (206 aa).

N-acetylmethionine is present on M1. The GTP site is built by S17, G20, K21, S22, S23, D34, P35, T40, G66, K123, and D125. S22 provides a ligand contact to Mg(2+). Short sequence motifs (switch) lie at residues 31–45 (DTFD…GVDF) and 63–80 (DTAG…YYRG). Residue T40 coordinates Mg(2+). S144 carries the post-translational modification Phosphoserine. A152 contacts GTP. C199 is lipidated: S-palmitoyl cysteine. C203 is subject to Cysteine methyl ester. C203 is lipidated: S-geranylgeranyl cysteine. Positions 204–206 (SVL) are cleaved as a propeptide — removed in mature form.

The protein belongs to the small GTPase superfamily. Rab family. As to quaternary structure, interacts (in GTP-bound form) with ZFYVE1. Interacts with ZW10 and this interaction is enhanced in the presence of ZFYVE1. Interacts with BSCL2. Mg(2+) serves as cofactor. In terms of tissue distribution, expression is high in the brain, moderate in the pituitary, and low in the liver. Detected in all tissues. Highly enriched on apical endocytic structures in polarized epithelial cells of kidney proximal tubules. Detected on both the apical and basolateral domains in epithelial cells of the intestine.

The protein resides in the endoplasmic reticulum membrane. Its subcellular location is the golgi apparatus. It localises to the cis-Golgi network membrane. It is found in the lipid droplet. The protein localises to the apical cell membrane. It catalyses the reaction GTP + H2O = GDP + phosphate + H(+). Regulated by guanine nucleotide exchange factor (GEF) RAB3GAP1-RAB3GAP2 complex at the cis-Golgi membrane which promotes the exchange of bound GDP for free GTP. Regulated by GTPase activating protein (GAP) TBC1D20 at the ER membrane which increases the GTP hydrolysis activity. Inhibited by GDP dissociation inhibitors (GDIs) which prevent Rab-GDP dissociation. In terms of biological role, the small GTPases Rab are key regulators of intracellular membrane trafficking, from the formation of transport vesicles to their fusion with membranes. Rabs cycle between an inactive GDP-bound form and an active GTP-bound form that is able to recruit to membranes different sets of downstream effectors directly responsible for vesicle formation, movement, tethering and fusion. RAB18 is required for the localization of ZFYVE1 to lipid droplets and for its function in mediating the formation of endoplasmic reticulum-lipid droplets (ER-LD) contacts. Also required for maintaining endoplasmic reticulum structure. Plays a role in apical endocytosis/recycling. Plays a key role in eye and brain development and neurodegeneration. This is Ras-related protein Rab-18 from Mus musculus (Mouse).